The primary structure comprises 435 residues: Glutamate-1-semialdehyde 2,1-aminomutase (435 aa).

An N6-(pyridoxal phosphate)lysine modification is found at lysine 266.

The protein belongs to the class-III pyridoxal-phosphate-dependent aminotransferase family. HemL subfamily. As to quaternary structure, homodimer. The cofactor is pyridoxal 5'-phosphate.

It is found in the cytoplasm. It catalyses the reaction (S)-4-amino-5-oxopentanoate = 5-aminolevulinate. It functions in the pathway porphyrin-containing compound metabolism; protoporphyrin-IX biosynthesis; 5-aminolevulinate from L-glutamyl-tRNA(Glu): step 2/2. The chain is Glutamate-1-semialdehyde 2,1-aminomutase from Coxiella burnetii (strain RSA 331 / Henzerling II).